Consider the following 363-residue polypeptide: NAD(P)H-quinone oxidoreductase subunit 1, chloroplastic (363 aa).

8 consecutive transmembrane segments (helical) span residues 30–50, 98–118, 127–147, 165–185, 203–223, 248–268, 300–320, and 336–356; these read LVPI…IVWL, FSIG…VIPF, LSIG…GLLM, AAQS…ISLL, FWGW…ISSL, YSGI…LVSS, VFGT…FLFI, and LLNL…LLTT.

Belongs to the complex I subunit 1 family. NDH is composed of at least 16 different subunits, 5 of which are encoded in the nucleus.

The protein localises to the plastid. Its subcellular location is the chloroplast thylakoid membrane. It catalyses the reaction a plastoquinone + NADH + (n+1) H(+)(in) = a plastoquinol + NAD(+) + n H(+)(out). The catalysed reaction is a plastoquinone + NADPH + (n+1) H(+)(in) = a plastoquinol + NADP(+) + n H(+)(out). Its function is as follows. NDH shuttles electrons from NAD(P)H:plastoquinone, via FMN and iron-sulfur (Fe-S) centers, to quinones in the photosynthetic chain and possibly in a chloroplast respiratory chain. The immediate electron acceptor for the enzyme in this species is believed to be plastoquinone. Couples the redox reaction to proton translocation, and thus conserves the redox energy in a proton gradient. The chain is NAD(P)H-quinone oxidoreductase subunit 1, chloroplastic from Solanum lycopersicum (Tomato).